Here is a 22-residue protein sequence, read N- to C-terminus: Mu-conotoxin CnIIIA (22 aa).

Intrachain disulfides connect cysteine 3/cysteine 15, cysteine 4/cysteine 21, and cysteine 10/cysteine 22. Cysteine 22 carries the post-translational modification Cysteine amide.

Belongs to the conotoxin M superfamily. Expressed by the venom duct. Has not been isolated from the crude venom.

It is found in the secreted. Its function is as follows. Mu-conotoxins block voltage-gated sodium channels (Nav). This synthetic toxin moderately blocks rNav1.1/SCN1A, rNav1.2/SCN2A, rNav1.3/SCN3A, rNav1.4/SCN4A, rNav1.5/SCN5A, and mNav1.6/SCN8A. This block is very slowly reversible. Causes seizures when injected intracranially into mice. The polypeptide is Mu-conotoxin CnIIIA (Conus consors (Singed cone)).